Here is a 206-residue protein sequence, read N- to C-terminus: Oligoribonuclease (206 aa).

One can recognise an Exonuclease domain in the interval 20–183 (LVWLDMEMTG…ADIHESIDEL (164 aa)). Tyrosine 141 is an active-site residue.

Belongs to the oligoribonuclease family.

The protein resides in the cytoplasm. 3'-to-5' exoribonuclease specific for small oligoribonucleotides. This chain is Oligoribonuclease, found in Burkholderia ambifaria (strain ATCC BAA-244 / DSM 16087 / CCUG 44356 / LMG 19182 / AMMD) (Burkholderia cepacia (strain AMMD)).